Reading from the N-terminus, the 191-residue chain is dCTP deaminase (191 aa).

Residues 112–117 (KSTYAR), 136–138 (TLE), Gln-157, Tyr-173, and Gln-183 contribute to the dCTP site. Residue Glu-138 is the Proton donor/acceptor of the active site.

The protein belongs to the dCTP deaminase family. Homotrimer.

It catalyses the reaction dCTP + H2O + H(+) = dUTP + NH4(+). It participates in pyrimidine metabolism; dUMP biosynthesis; dUMP from dCTP (dUTP route): step 1/2. In terms of biological role, catalyzes the deamination of dCTP to dUTP. This chain is dCTP deaminase, found in Psychrobacter arcticus (strain DSM 17307 / VKM B-2377 / 273-4).